A 352-amino-acid chain; its full sequence is ADP-ribosylation factor GTPase-activating protein GCS1 (352 aa).

Positions 11 to 127 (RRRLLQLQKI…LTCLCEDRVF (117 aa)) constitute an Arf-GAP domain. The segment at 26-49 (CMDCGAPNPQWATPKFGAFICLEC) adopts a C4-type zinc-finger fold. A compositionally biased stretch (low complexity) spans 138-151 (SKLSATSQTAASAT). 2 disordered regions span residues 138–181 (SKLS…ANFQ) and 196–231 (NQSR…GSSN). Thr151 bears the Phosphothreonine mark. Ser157 carries the post-translational modification Phosphoserine. Thr161 bears the Phosphothreonine mark. Ser168 is modified (phosphoserine). Residues 168 to 179 (SATPANSSNGAN) show a composition bias toward polar residues. The residue at position 170 (Thr170) is a Phosphothreonine. Position 260 is a phosphoserine (Ser260). The span at 315–330 (NGNAEDSSTAGNTTHT) shows a compositional bias: polar residues. The segment at 315–352 (NGNAEDSSTAGNTTHTEYQKIDNNDKKNEQDEDKWDDF) is disordered. A compositionally biased stretch (basic and acidic residues) spans 331–343 (EYQKIDNNDKKNE).

It is found in the cytoplasm. The protein resides in the mitochondrion. Its subcellular location is the perinuclear region. It localises to the golgi apparatus. In terms of biological role, GTPase-activating protein (GAP) for ARF1 and ARF2. Involved in intracellular vesicular transport. Required for transport from the trans-Golgi network. Implicated in the regulation of retrograde transport from the Golgi to the ER and in actin cytoskeletal organization. May be involved in the maintenance of mitochondrial morphology, possibly through organizing the actin cytoskeleton in Saccharomyces. The protein is ADP-ribosylation factor GTPase-activating protein GCS1 (GCS1) of Saccharomyces cerevisiae (strain ATCC 204508 / S288c) (Baker's yeast).